Here is a 398-residue protein sequence, read N- to C-terminus: Ribosomal RNA large subunit methyltransferase F (398 aa).

Residues 1-12 (MTPSRKPARPGA) show a composition bias toward basic residues. Positions 1–85 (MTPSRKPARP…RNLHGQGYDF (85 aa)) are disordered. Low complexity-rich tracts occupy residues 20 to 40 (PSAK…AQPK) and 48 to 59 (QAKSQAKPQAKS).

Belongs to the methyltransferase superfamily. METTL16/RlmF family.

The protein resides in the cytoplasm. It catalyses the reaction adenosine(1618) in 23S rRNA + S-adenosyl-L-methionine = N(6)-methyladenosine(1618) in 23S rRNA + S-adenosyl-L-homocysteine + H(+). Its function is as follows. Specifically methylates the adenine in position 1618 of 23S rRNA. This Shewanella loihica (strain ATCC BAA-1088 / PV-4) protein is Ribosomal RNA large subunit methyltransferase F.